We begin with the raw amino-acid sequence, 212 residues long: Peptide methionine sulfoxide reductase MsrA (212 aa).

Residue C52 is part of the active site.

Belongs to the MsrA Met sulfoxide reductase family.

It carries out the reaction L-methionyl-[protein] + [thioredoxin]-disulfide + H2O = L-methionyl-(S)-S-oxide-[protein] + [thioredoxin]-dithiol. The catalysed reaction is [thioredoxin]-disulfide + L-methionine + H2O = L-methionine (S)-S-oxide + [thioredoxin]-dithiol. Functionally, has an important function as a repair enzyme for proteins that have been inactivated by oxidation. Catalyzes the reversible oxidation-reduction of methionine sulfoxide in proteins to methionine. This is Peptide methionine sulfoxide reductase MsrA from Shigella boydii serotype 18 (strain CDC 3083-94 / BS512).